We begin with the raw amino-acid sequence, 289 residues long: BTB/POZ domain-containing protein KCTD7 (289 aa).

The segment at 1–40 is disordered; that stretch reads MVVVTGREPDSRRPDGAMSSSDAEDDFLEPATPTATQAGH. In terms of domain architecture, BTB spans 53-141; it reads VPLNIGGAHF…YAIGPLLEQL (89 aa).

Interacts with CUL3.

It is found in the cell membrane. Its subcellular location is the cytoplasm. The protein localises to the cytosol. In terms of biological role, may be involved in the control of excitability of cortical neurons. The protein is BTB/POZ domain-containing protein KCTD7 (KCTD7) of Bos taurus (Bovine).